The following is a 27-amino-acid chain: Nemertide alpha-8 (27 aa).

3 disulfides stabilise this stretch: cysteine 2–cysteine 16, cysteine 9–cysteine 20, and cysteine 15–cysteine 26.

The protein belongs to the nemertide family. Confined to the epidermis and to the mucus layer.

The protein localises to the secreted. In terms of biological role, highly potent toxin against both insect and some mammalian sodium channels (Nav). It potently inhibits inactivation of insect sodium channels of B.germanica (BgNav1) and also delays the inactivation of mammalian Nav with potent activity on Nav1.3/SCN3A and Nav1.4/SCN4A. 1 uM is enough to completely inhibits the inactivation, resulting in sustained non-inactivating currents. In addition, the toxin significantly enhances the recovery from inactivation, and the open state is not required for the toxin to interact with the channel. In vivo, injection into brine shrimp (Artemia salina) stops movement or causes death after 24 hours (EC(50)=0.4 uM). The sequence is that of Nemertide alpha-8 from Riseriellus occultus (Ribbon worm).